The sequence spans 790 residues: Lon protease (790 aa).

In terms of domain architecture, Lon N-terminal spans 13–209 (LPLFPIRNTV…RLTDHVAKEI (197 aa)). 362-369 (GPPGVGKT) contacts ATP. Residues 598–779 (DNQVGITIGL…DQVLDIALAT (182 aa)) form the Lon proteolytic domain. Residues Ser-685 and Lys-728 contribute to the active site.

It belongs to the peptidase S16 family. Homohexamer. Organized in a ring with a central cavity.

Its subcellular location is the cytoplasm. It carries out the reaction Hydrolysis of proteins in presence of ATP.. Its function is as follows. ATP-dependent serine protease that mediates the selective degradation of mutant and abnormal proteins as well as certain short-lived regulatory proteins. Required for cellular homeostasis and for survival from DNA damage and developmental changes induced by stress. Degrades polypeptides processively to yield small peptide fragments that are 5 to 10 amino acids long. Binds to DNA in a double-stranded, site-specific manner. This is Lon protease from Orientia tsutsugamushi (strain Ikeda) (Rickettsia tsutsugamushi).